The chain runs to 1264 residues: Protein fantom (1264 aa).

Coiled-coil stretches lie at residues 64–143 (LKQH…LQVQ), 196–268 (YSNS…NVET), 299–454 (LRIS…ESDI), and 488–555 (NKDL…VHLL). C2 domains are found at residues 577–714 (KQYK…FCTT) and 773–897 (AATT…SGIF). Disordered stretches follow at residues 979-1018 (DTISHPSPETSPPPKDIKDSSPEVGPKPENGLSAVAYPSK) and 1047-1093 (QLAS…NTKQ). Residues 1056–1080 (SEDETEITEELEPEDEDRSASDSDD) are compositionally biased toward acidic residues.

The protein belongs to the RPGRIP1 family. In terms of assembly, interacts with NPHP4 and NPHP1; NPHP1, NPHP4 and RPGRIP1L are proposed to form a functional NPHP1-4-8 module localized to cell-cell contacts and the ciliary transition zone; NPHP4 mediates the interaction between NPHP1 and RPGRIP1L. Interacts with IQCB1; the interaction likely requires additional interactors. Interacts with TBXA2R (via C-terminus), RPGR, NEK4. Interacts with NPHP4, INVS and DVL2; proposed to form a complex involved in DVL2 stabilization. Interacts with PSMD2. In terms of tissue distribution, ubiquitously expressed. Not found in heart and skin.

It is found in the cytoplasm. It localises to the cytoskeleton. The protein resides in the cilium basal body. Its subcellular location is the cilium axoneme. The protein localises to the microtubule organizing center. It is found in the centrosome. It localises to the cell junction. The protein resides in the tight junction. Negatively regulates signaling through the G-protein coupled thromboxane A2 receptor (TBXA2R). May be involved in mechanisms like programmed cell death, craniofacial development, patterning of the limbs, and formation of the left-right axis. Involved in the organization of apical junctions; the function is proposed to implicate a NPHP1-4-8 module. Does not seem to be strictly required for ciliogenesis. Involved in establishment of planar cell polarity such as in cochlear sensory epithelium and is proposed to implicate stabilization of disheveled proteins. Involved in regulation of proteasomal activity at the primary cilium probably implicating association with PSDM2. The polypeptide is Protein fantom (Rpgrip1l) (Mus musculus (Mouse)).